The primary structure comprises 96 residues: Citrate lyase acyl carrier protein (96 aa).

An O-(phosphoribosyl dephospho-coenzyme A)serine modification is found at Ser14.

This sequence belongs to the CitD family. In terms of assembly, oligomer with a subunit composition of (alpha,beta,gamma)6.

The protein resides in the cytoplasm. Its function is as follows. Covalent carrier of the coenzyme of citrate lyase. In Lactiplantibacillus plantarum (strain ATCC BAA-793 / NCIMB 8826 / WCFS1) (Lactobacillus plantarum), this protein is Citrate lyase acyl carrier protein.